A 133-amino-acid chain; its full sequence is Thioredoxin H2 (133 aa).

Positions 1–22 (MGGALSTVFGSGEDATAAGTES) are disordered. Residues 6 to 133 (STVFGSGEDA…LEKKVSKLRA (128 aa)) enclose the Thioredoxin domain. Active-site nucleophile residues include Cys-59 and Cys-62. Cys-59 and Cys-62 are oxidised to a cystine.

The protein belongs to the thioredoxin family. Plant H-type subfamily. Interacts with MDH1.

Its subcellular location is the cytoplasm. It localises to the mitochondrion. Functionally, thiol-disulfide oxidoreductase probably involved in the redox regulation of a number of cytosolic enzymes. Possesses insulin disulfide bonds reducing activity. The sequence is that of Thioredoxin H2 (TRX2) from Arabidopsis thaliana (Mouse-ear cress).